A 1265-amino-acid chain; its full sequence is MEEMVSQNTEGDKSIDDHWQTEGAETQPGLHETFPLGVLKARVALLATAIGGPDHTSEQEAAPYKLGDDCLACLKDLKRWFVLVDQKQKRWDVASAAAEFRILEEDLIPILVQWEQKMSQGIKQSKVSGLPLSECIKNKQYHGKIALNAFQLMVWMTWPMTLNEESSKNQVHHYSGLKKHQLAYKKAILQAHGGKVVKAAVRIATEVIKIDRLDRSVQDNSLIRLVLNFLRNILAIEPGEVTVSAKQLSKSRNINTSDMLPPNISVDDICLNSVVSVFKKFKVFPFLLTISSSMGHEFEAEYVCLPLLEVAFYLTKDIDPHLLSLKADNPPQSLQNCGNKVSNGQGVVSGQLGMELIHLLDKERHHKMSQIRSSSTRHSRFGGFFSIQTPNNGRLTISNGHSALDHDLALNNIDKKKKWNKTTRNTAEAVQGIPVGVLNGEFNLTFLSHDNRSCLKWFLANFVDSSFNILLKNLIDYFTADEFNQQILQKLQFLLFYAWFLKFERDRCQKGETDGIFVSEALQDTSHILIIKFLREAHELKKWPLVHAAMLAITELLNYLDVLGEDWEEDVVGIYTKIFSNERLKLFSTIPRTASRHSLHYVKACINMNHAIMTTLERFNKNNKDLIIKGFRKRMITRFIVKEGKTTSGDVNGNKNGQDTTRDADEDAISSDEETNMISARLDFKKVLDAYFNGTVIDTYIFYLKHFTELTEEDIKRVLYFLNHILCSNEESFLFRVDFMIVLKEMLAPGGLSVTGHTRIRINEFSDHFMAKLKRKLEKSPFWYINILFPNLHDRELGYYLRYGQQRPNTQSIHKVVAPTMFKHIEGEENMSEQQLKDLKIGVLVSTLLDDGKNHFVEEINRIFKLVVEGYEKHYQNNERSATLHYPRVDFRSDMFDMKRALLFDSDLRALMTTLGYHVADTEVEPCYIGGIFYFPDLSSALNSLEQYMAIPFHTPNGLPSSSYLLRSIDYKSGVDADAKVGEAMRIDQFSDEMADMALSENANRYFEDLNRMEERLEGKQIPRGTAKKRSAIKPKSRKSQPTGIGGIDDDTPVINKSKRKKQLFLSNEFIMDSDDEEELVASPIFYENEIYLRFILNKYQGNLPSHLFSVFSRFANERGRMAGAVVGDYTDLFNGPVPSIEELKSMENSTTHHGLKEILQLQPRDHLSLSPNNENNSAHSSENLSSDSENDNITNDIPLSDSEYNSSNSSQYANTAKTSIIDPPSSKTSLLKLALTHEADVESEDDFIPRKRARKVRLEDGEEY.

A compositionally biased stretch (polar residues) spans 650–659; that stretch reads DVNGNKNGQD. Disordered stretches follow at residues 650 to 670, 1019 to 1052, and 1167 to 1226; these read DVNGNKNGQDTTRDADEDAIS, GKQIPRGTAKKRSAIKPKSRKSQPTGIGGIDDDT, and HLSL…DPPS. Positions 1026–1039 are enriched in basic residues; sequence TAKKRSAIKPKSRK. Composition is skewed to low complexity over residues 1171–1188 and 1201–1211; these read SPNNENNSAHSSENLSSD and SDSEYNSSNSS.

It belongs to the timeless family. As to quaternary structure, component of the fork protection complex (FPC) consisting of TOF1 and CSM3.

Its subcellular location is the nucleus. Forms a fork protection complex (FPC) with CSM3 and which is required for chromosome segregation during meiosis and DNA damage repair. FPC coordinates leading and lagging strand synthesis and moves with the replication fork. FPC stabilizes replication forks in a configuration that is recognized by replication checkpoint sensors. This Eremothecium gossypii (strain ATCC 10895 / CBS 109.51 / FGSC 9923 / NRRL Y-1056) (Yeast) protein is Topoisomerase 1-associated factor 1 (TOF1).